Here is a 334-residue protein sequence, read N- to C-terminus: Lipoyl synthase (334 aa).

Residues 8–33 (LNNDTRPKVEAPARPRHPEKAHRPDT) are disordered. Residues 12 to 33 (TRPKVEAPARPRHPEKAHRPDT) are compositionally biased toward basic and acidic residues. Residues cysteine 68, cysteine 73, cysteine 79, cysteine 94, cysteine 98, cysteine 101, and serine 307 each coordinate [4Fe-4S] cluster. The 217-residue stretch at 80 to 296 (WEKRHATFMI…ETTAYAKGFL (217 aa)) folds into the Radical SAM core domain.

It belongs to the radical SAM superfamily. Lipoyl synthase family. [4Fe-4S] cluster serves as cofactor.

It localises to the cytoplasm. It carries out the reaction [[Fe-S] cluster scaffold protein carrying a second [4Fe-4S](2+) cluster] + N(6)-octanoyl-L-lysyl-[protein] + 2 oxidized [2Fe-2S]-[ferredoxin] + 2 S-adenosyl-L-methionine + 4 H(+) = [[Fe-S] cluster scaffold protein] + N(6)-[(R)-dihydrolipoyl]-L-lysyl-[protein] + 4 Fe(3+) + 2 hydrogen sulfide + 2 5'-deoxyadenosine + 2 L-methionine + 2 reduced [2Fe-2S]-[ferredoxin]. It participates in protein modification; protein lipoylation via endogenous pathway; protein N(6)-(lipoyl)lysine from octanoyl-[acyl-carrier-protein]: step 2/2. In terms of biological role, catalyzes the radical-mediated insertion of two sulfur atoms into the C-6 and C-8 positions of the octanoyl moiety bound to the lipoyl domains of lipoate-dependent enzymes, thereby converting the octanoylated domains into lipoylated derivatives. The chain is Lipoyl synthase from Methylorubrum populi (strain ATCC BAA-705 / NCIMB 13946 / BJ001) (Methylobacterium populi).